The following is a 196-amino-acid chain: Thymidylate kinase (196 aa).

Position 7-14 (Gly7–Thr14) interacts with ATP.

This sequence belongs to the thymidylate kinase family.

The catalysed reaction is dTMP + ATP = dTDP + ADP. Functionally, phosphorylation of dTMP to form dTDP in both de novo and salvage pathways of dTTP synthesis. The sequence is that of Thymidylate kinase from Wolbachia pipientis wMel.